Reading from the N-terminus, the 100-residue chain is Proline-rich protein 15-like protein (100 aa).

The tract at residues 29–51 (YAQTEGGAEPPGPDAGDPHSDFN) is disordered.

Belongs to the PRR15 family.

This Mus musculus (Mouse) protein is Proline-rich protein 15-like protein (Prr15l).